The sequence spans 435 residues: Endosome-associated-trafficking regulator 1 (435 aa).

Residues Ser-18 and Ser-147 each carry the phosphoserine modification. Disordered regions lie at residues 136–185 (ASRH…TGWS) and 225–251 (ESLP…PSAD). The segment covering 173-182 (LLDEEEDEDT) has biased composition (acidic residues). Positions 173–198 (LLDEEEDEDTGWSGAYLPSAIEQTHP) are required for interaction with PTPN13. The span at 240–250 (SPASPAGSPSA) shows a compositional bias: low complexity. A phosphoserine mark is found at Ser-243 and Ser-247. The stretch at 261 to 371 (DRHLRTLQIS…FQRENEALRC (111 aa)) forms a coiled coil.

It belongs to the ENTR1 family. In terms of assembly, found in a complex with ENTR1, PTPN13 and GIT1. Interacts with PTPN13 (via the FERM domain). Interacts (via N-terminus) with GIT1 (via N- and C-terminus); this interaction is direct. Interacts with NOD2. Interacts (via N-terminus) with IFT88. Interacts with VPS35. Post-translationally, phosphorylated. As to expression, expressed in the colon (at protein level).

It is found in the cytoplasm. The protein localises to the early endosome. The protein resides in the endosome. Its subcellular location is the recycling endosome. It localises to the midbody. It is found in the cytoskeleton. The protein localises to the microtubule organizing center. The protein resides in the centrosome. Its subcellular location is the cilium basal body. In terms of biological role, endosome-associated protein that plays a role in membrane receptor sorting, cytokinesis and ciliogenesis. Involved in the endosome-to-plasma membrane trafficking and recycling of SNX27-retromer-dependent cargo proteins, such as GLUT1. Involved in the regulation of cytokinesis; the function may involve PTPN13 and GIT1. Plays a role in the formation of cilia. Involved in cargo protein localization, such as PKD2, at primary cilia. Involved in the presentation of the tumor necrosis factor (TNF) receptor TNFRSF1A on the cell surface, and hence in the modulation of the TNF-induced apoptosis. This Homo sapiens (Human) protein is Endosome-associated-trafficking regulator 1.